Reading from the N-terminus, the 2898-residue chain is Papilin (2898 aa).

The signal sequence occupies residues 1–26 (MDLSRRLCSTALVAFIVLASIHDSQS). Residues 43 to 67 (LPESSVTPGGEGNDPDEWTPWSSPS) are disordered. A TSP type-1 1 domain is found at 57-111 (PDEWTPWSSPSDCSRTCGGGVSYQTRECLRRDDRGEAVCSGGSRRYFSCNTQDCP). Disulfide bonds link Cys69/Cys105, Cys73/Cys110, and Cys84/Cys95. N-linked (GlcNAc...) asparagine glycosylation is found at Asn258 and Asn319. In terms of domain architecture, TSP type-1 2 spans 338 to 397 (DTHTWTHHQFNACSASCGGGSQSRKVTCNNRITLAEVNPSLCDQKSKPVEEQACGTEPCA). N-linked (GlcNAc...) asparagine glycosylation is present at Asn419. TSP type-1 domains follow at residues 461–521 (NCPK…TPCE), 522–575 (GVDW…KSPK), 576–633 (CEAQ…QDCE), and 639–694 (CPGE…EACT). Cystine bridges form between Cys462/Cys504, Cys473/Cys515, and Cys477/Cys520. N-linked (GlcNAc...) asparagine glycosylation is present at Asn669. Disordered stretches follow at residues 699–1252 (LPLT…CAKS) and 1323–1367 (GEND…PDTK). Acidic residues-rich tracts occupy residues 708 to 720 (IEDDEEDCDEDGI) and 727 to 738 (LSDDEKSEDVID). Residues 768–788 (STGTTFEGSGYDSESTTDSGI) are compositionally biased toward polar residues. Residues 801–879 (EASTDLSSST…ASASESTDVS (79 aa)) show a composition bias toward low complexity. N-linked (GlcNAc...) asparagine glycosylation is found at Asn889, Asn914, Asn917, Asn950, and Asn1064. A compositionally biased stretch (low complexity) spans 890-1053 (ASDSTPESST…SDNTDITTDG (164 aa)). Residues 1064–1073 (NASTEGSTEG) show a composition bias toward polar residues. Composition is skewed to low complexity over residues 1076–1091 (EDTTISTESSGSTEST) and 1104–1215 (STVE…IWST). Positions 1237–1248 (SKPRKCKPKKST) are enriched in basic residues. Residues 1330–1351 (PETTTVPPTTTTEETQPETTTE) show a composition bias toward low complexity. Residues Asn1489 and Asn1623 are each glycosylated (N-linked (GlcNAc...) asparagine). 15 disulfides stabilise this stretch: Cys1612–Cys1662, Cys1621–Cys1645, Cys1637–Cys1658, Cys1671–Cys1721, Cys1680–Cys1704, Cys1696–Cys1717, Cys1730–Cys1780, Cys1739–Cys1763, Cys1755–Cys1776, Cys1790–Cys1840, Cys1799–Cys1823, Cys1815–Cys1836, Cys1849–Cys1899, Cys1858–Cys1882, and Cys1874–Cys1895. BPTI/Kunitz inhibitor domains lie at 1612 to 1662 (CGLP…KDTC), 1671 to 1721 (CLLP…QGTC), 1730 to 1780 (CEQP…NYNC), 1790 to 1840 (CALP…EDHC), and 1849 to 1899 (CEIP…LARC). Asn1750 carries N-linked (GlcNAc...) asparagine glycosylation. The tract at residues 1902–1928 (KPEPTTTTPATRPQPSRQDVCDEEPAP) is disordered. Over residues 1905–1916 (PTTTTPATRPQP) the composition is skewed to low complexity. Intrachain disulfides connect Cys1922/Cys1972, Cys1931/Cys1955, and Cys1947/Cys1968. In terms of domain architecture, BPTI/Kunitz inhibitor 6 spans 1922 to 1972 (CDEEPAPGECSTWVLKWHFDRKIGACRQFYYGNCGGNGNRFETENDCQQRC). The segment at 1972-2004 (CLSQEPPAPTPPRAPAPTRQPDPAPTVAQCSQP) is disordered. Residues 1977–1995 (PPAPTPPRAPAPTRQPDPA) are compositionally biased toward pro residues. 18 disulfides stabilise this stretch: Cys2001-Cys2051, Cys2010-Cys2034, Cys2026-Cys2047, Cys2071-Cys2121, Cys2080-Cys2104, Cys2096-Cys2117, Cys2128-Cys2178, Cys2137-Cys2161, Cys2153-Cys2174, Cys2194-Cys2244, Cys2203-Cys2227, Cys2219-Cys2240, Cys2253-Cys2303, Cys2262-Cys2286, Cys2278-Cys2299, Cys2318-Cys2371, Cys2327-Cys2354, and Cys2346-Cys2367. 6 BPTI/Kunitz inhibitor domains span residues 2001–2051 (CSQP…SARC), 2071–2121 (CFLA…QNEC), 2128–2178 (CALP…LNFC), 2194–2244 (CAEP…ERQC), 2253–2303 (CNEP…QTVC), and 2318–2371 (CLLP…TNQC). The N-linked (GlcNAc...) asparagine glycan is linked to Asn2020. N-linked (GlcNAc...) asparagine glycosylation is present at Asn2083. The N-linked (GlcNAc...) asparagine glycan is linked to Asn2205. In terms of domain architecture, WAP spans 2452–2498 (DIYKPGECPALSANASGCARECYTDADCRGDNKCCSDGCGQLCVHPA). Residues Asn2465, Asn2552, and Asn2625 are each glycosylated (N-linked (GlcNAc...) asparagine). 3 Ig-like C2-type domains span residues 2523–2607 (PKEA…REVA), 2617–2697 (PAYI…RPVS), and 2749–2840 (PTVN…ANVS). Cys2543 and Cys2592 are oxidised to a cystine. 2 cysteine pairs are disulfide-bonded: Cys2640–Cys2687 and Cys2775–Cys2824. Asn2784 and Asn2838 each carry an N-linked (GlcNAc...) asparagine glycan. The region spanning 2847–2886 (VSPECVDNPYFANCKLIVKGRYCSNPYYTQFCCRSCTLAG) is the PLAC domain.

The protein belongs to the papilin family. In terms of assembly, homooligomer; disulfide-linked. N-glycosylated. Post-translationally, sulfated. In terms of tissue distribution, during embryogenesis it first appears in the extracellular matrix during gastrulation and early mesoderm development at sites where basement membranes do not subsequently form. Later, migrating hemocytes prominently produce it together with other ECM components, in basement membranes that underlie epithelia and envelop muscles and emerging organs. At various life stages, it can be synthesized by other cells, such as those of the fat body, and it also occurs in a few, circumscribed regions of relatively amorphous ECM. Isoform E is specifically expressed in ECM of heart and proventriculus. Isoform C is a major component of transitory ECM deposit in the early embryo. Isoform F is a major component of the basement membrane during embryogenesis.

It is found in the secreted. The protein resides in the extracellular space. The protein localises to the extracellular matrix. Its subcellular location is the basement membrane. Its function is as follows. Essential extracellular matrix (ECM) protein that influences cell rearrangements. May act by modulating metalloproteinases action during organogenesis. Able to non-competitively inhibit procollagen N-proteinase, an ADAMTS metalloproteinase. This is Papilin (Ppn) from Drosophila melanogaster (Fruit fly).